Consider the following 220-residue polypeptide: MADSVHLNRRGVLFVLSSPSGAGKTTISRMMLEEDKDIALSVSATTRPPRPGEIDGVHYHFVDTDTFKKMAADGAFLEWAHVFGHRYGTPRAPVEELLAAGKDVLFDIDWQGAQQLYQEAGPDVVRVFVLPPTMEELERRLRARGTDSDEVIAARMARAANEISHWDGYDYVLINDHVGECYGEVMAILRAERLKRRRQIGLIGFARDLIRSVPDADTKL.

The 180-residue stretch at 11–190 (GVLFVLSSPS…CYGEVMAILR (180 aa)) folds into the Guanylate kinase-like domain. ATP is bound at residue 18–25 (SPSGAGKT).

The protein belongs to the guanylate kinase family.

Its subcellular location is the cytoplasm. It carries out the reaction GMP + ATP = GDP + ADP. Its function is as follows. Essential for recycling GMP and indirectly, cGMP. The chain is Guanylate kinase from Sphingopyxis alaskensis (strain DSM 13593 / LMG 18877 / RB2256) (Sphingomonas alaskensis).